The sequence spans 595 residues: Aspartate--tRNA(Asp/Asn) ligase (595 aa).

Glu174 provides a ligand contact to L-aspartate. Residues 198–201 form an aspartate region; it reads QLFK. Arg220 lines the L-aspartate pocket. Residues 220-222 and Gln229 contribute to the ATP site; that span reads RDE. Residue His452 participates in L-aspartate binding. ATP is bound at residue Glu486. Residue Arg493 coordinates L-aspartate. 538–541 is an ATP binding site; it reads GLDR.

It belongs to the class-II aminoacyl-tRNA synthetase family. Type 1 subfamily. Homodimer.

It localises to the cytoplasm. It carries out the reaction tRNA(Asx) + L-aspartate + ATP = L-aspartyl-tRNA(Asx) + AMP + diphosphate. In terms of biological role, aspartyl-tRNA synthetase with relaxed tRNA specificity since it is able to aspartylate not only its cognate tRNA(Asp) but also tRNA(Asn). Reaction proceeds in two steps: L-aspartate is first activated by ATP to form Asp-AMP and then transferred to the acceptor end of tRNA(Asp/Asn). In Nitrosococcus oceani (strain ATCC 19707 / BCRC 17464 / JCM 30415 / NCIMB 11848 / C-107), this protein is Aspartate--tRNA(Asp/Asn) ligase.